Consider the following 378-residue polypeptide: Fructose-1,6-bisphosphatase class 1 2 (378 aa).

Mg(2+)-binding residues include E98, D120, L122, and D123. Substrate-binding positions include 123 to 126 and N227; that span reads DGSS. E299 is a Mg(2+) binding site.

This sequence belongs to the FBPase class 1 family. As to quaternary structure, homotetramer. It depends on Mg(2+) as a cofactor.

Its subcellular location is the cytoplasm. It carries out the reaction beta-D-fructose 1,6-bisphosphate + H2O = beta-D-fructose 6-phosphate + phosphate. The protein operates within carbohydrate biosynthesis; gluconeogenesis. The protein is Fructose-1,6-bisphosphatase class 1 2 of Paraburkholderia xenovorans (strain LB400).